The primary structure comprises 213 residues: 3-isopropylmalate dehydratase small subunit (213 aa).

Belongs to the LeuD family. LeuD type 1 subfamily. Heterodimer of LeuC and LeuD.

The catalysed reaction is (2R,3S)-3-isopropylmalate = (2S)-2-isopropylmalate. The protein operates within amino-acid biosynthesis; L-leucine biosynthesis; L-leucine from 3-methyl-2-oxobutanoate: step 2/4. Catalyzes the isomerization between 2-isopropylmalate and 3-isopropylmalate, via the formation of 2-isopropylmaleate. This is 3-isopropylmalate dehydratase small subunit from Aromatoleum aromaticum (strain DSM 19018 / LMG 30748 / EbN1) (Azoarcus sp. (strain EbN1)).